Consider the following 126-residue polypeptide: Fluoride-specific ion channel FluC 1 (126 aa).

The next 3 helical transmembrane spans lie at 37-57 (HWGTLLVNVISSFALGLVLAL), 67-87 (IALLMGVGFFGTLSTFSTFVV), and 98-118 (LLAAAALAVISIVAGLIAAAA). Residues Gly77 and Ser80 each contribute to the Na(+) site.

Belongs to the fluoride channel Fluc/FEX (TC 1.A.43) family.

It is found in the cell inner membrane. The catalysed reaction is fluoride(in) = fluoride(out). Its activity is regulated as follows. Na(+) is not transported, but it plays an essential structural role and its presence is essential for fluoride channel function. Fluoride-specific ion channel. Important for reducing fluoride concentration in the cell, thus reducing its toxicity. This chain is Fluoride-specific ion channel FluC 1, found in Parasynechococcus marenigrum (strain WH8102).